A 78-amino-acid chain; its full sequence is Acyl carrier protein (78 aa).

Positions 2–77 (STIEERVKKI…AAIDYVKAHQ (76 aa)) constitute a Carrier domain. The residue at position 37 (serine 37) is an O-(pantetheine 4'-phosphoryl)serine.

It belongs to the acyl carrier protein (ACP) family. 4'-phosphopantetheine is transferred from CoA to a specific serine of apo-ACP by AcpS. This modification is essential for activity because fatty acids are bound in thioester linkage to the sulfhydryl of the prosthetic group.

Its subcellular location is the cytoplasm. Its pathway is lipid metabolism; fatty acid biosynthesis. Carrier of the growing fatty acid chain in fatty acid biosynthesis. The protein is Acyl carrier protein of Pseudomonas putida (strain ATCC 700007 / DSM 6899 / JCM 31910 / BCRC 17059 / LMG 24140 / F1).